The following is a 164-amino-acid chain: Probable ribosome biogenesis protein RLP24 (164 aa).

This sequence belongs to the eukaryotic ribosomal protein eL24 family. Associated with nucleolar and cytoplasmic pre-60S particles. At the end of biogenesis it dissociates from cytoplasmic pre-60S particles and is likely to be exchanged for its ribosomal homolog, RPL24.

The protein resides in the cytoplasm. Its subcellular location is the nucleus. Functionally, involved in the biogenesis of the 60S ribosomal subunit. Ensures the docking of nog1 to pre-60S particles. Activates and recruits ATPase AFG2 to cytoplasmic pre-60S ribosomal particles. The sequence is that of Probable ribosome biogenesis protein RLP24 (rlp24) from Dictyostelium discoideum (Social amoeba).